Reading from the N-terminus, the 172-residue chain is S-ribosylhomocysteine lyase (172 aa).

Residues histidine 54, histidine 58, and cysteine 128 each contribute to the Fe cation site.

It belongs to the LuxS family. Homodimer. It depends on Fe cation as a cofactor.

The enzyme catalyses S-(5-deoxy-D-ribos-5-yl)-L-homocysteine = (S)-4,5-dihydroxypentane-2,3-dione + L-homocysteine. In terms of biological role, involved in the synthesis of autoinducer 2 (AI-2) which is secreted by bacteria and is used to communicate both the cell density and the metabolic potential of the environment. The regulation of gene expression in response to changes in cell density is called quorum sensing. Catalyzes the transformation of S-ribosylhomocysteine (RHC) to homocysteine (HC) and 4,5-dihydroxy-2,3-pentadione (DPD). This is S-ribosylhomocysteine lyase from Vibrio parahaemolyticus serotype O3:K6 (strain RIMD 2210633).